We begin with the raw amino-acid sequence, 257 residues long: Dof zinc finger protein DOF5.3 (257 aa).

Residues 23 to 50 (LSYSSNPTPLDNDQKKPSPATAVTRPQP) form a disordered region. Residues 24–33 (SYSSNPTPLD) show a composition bias toward polar residues. The Dof-type zinc finger occupies 55–109 (LRCPRCDSTNTKFCYYNNYSLTQPRYFCKSCRRYWTKGGTLRNIPVGGGCRKNKR). Zn(2+) is bound by residues cysteine 57, cysteine 60, cysteine 82, and cysteine 85. Residues 104–127 (CRKNKRSTSSAARSLRTTPEPASH) are disordered. Low complexity predominate over residues 110-121 (STSSAARSLRTT).

As to expression, the PEAR proteins (e.g. DOF2.4, DOF5.1, DOF3.2, DOF1.1, DOF5.6 and DOF5.3) form a short-range concentration gradient that peaks at protophloem sieve elements (PSE). Accumulates in the stele.

It localises to the nucleus. Transcription factor that binds specifically to a 5'-AA[AG]G-3' consensus core sequence. The PEAR proteins (e.g. DOF2.4, DOF5.1, DOF3.2, DOF1.1, DOF5.6 and DOF5.3) activate gene expression that promotes radial growth of protophloem sieve elements. This chain is Dof zinc finger protein DOF5.3, found in Arabidopsis thaliana (Mouse-ear cress).